A 261-amino-acid polypeptide reads, in one-letter code: Probable septum site-determining protein MinC (261 aa).

The segment at 106–144 (RAPAAKPADEAEPAAVPAVETAAAPAAAAAPEQSSDPAP) is disordered. Residues 118–144 (PAAVPAVETAAAPAAAAAPEQSSDPAP) are compositionally biased toward low complexity.

This sequence belongs to the MinC family. As to quaternary structure, interacts with MinD and FtsZ.

Functionally, cell division inhibitor that blocks the formation of polar Z ring septums. Rapidly oscillates between the poles of the cell to destabilize FtsZ filaments that have formed before they mature into polar Z rings. Prevents FtsZ polymerization. This Burkholderia orbicola (strain MC0-3) protein is Probable septum site-determining protein MinC.